Consider the following 88-residue polypeptide: Defensin-like protein 24 (88 aa).

The first 23 residues, 1 to 23 (MASSKFVLFAILALSLLLSGTEA), serve as a signal peptide directing secretion. Intrachain disulfides connect Cys37–Cys87, Cys47–Cys72, Cys56–Cys83, and Cys60–Cys85.

This sequence belongs to the DEFL family.

The protein localises to the secreted. In Arabidopsis thaliana (Mouse-ear cress), this protein is Defensin-like protein 24.